A 422-amino-acid polypeptide reads, in one-letter code: Histidine--tRNA ligase (422 aa).

It belongs to the class-II aminoacyl-tRNA synthetase family. As to quaternary structure, homodimer.

The protein localises to the cytoplasm. The catalysed reaction is tRNA(His) + L-histidine + ATP = L-histidyl-tRNA(His) + AMP + diphosphate + H(+). This chain is Histidine--tRNA ligase, found in Ruthia magnifica subsp. Calyptogena magnifica.